Consider the following 422-residue polypeptide: Glutamyl-tRNA reductase (422 aa).

Substrate-binding positions include 49–52 (TCNR), S107, 112–114 (EPQ), and Q118. C50 functions as the Nucleophile in the catalytic mechanism. NADP(+) is bound at residue 187–192 (GAGETI).

The protein belongs to the glutamyl-tRNA reductase family. Homodimer.

It catalyses the reaction (S)-4-amino-5-oxopentanoate + tRNA(Glu) + NADP(+) = L-glutamyl-tRNA(Glu) + NADPH + H(+). Its pathway is porphyrin-containing compound metabolism; protoporphyrin-IX biosynthesis; 5-aminolevulinate from L-glutamyl-tRNA(Glu): step 1/2. Catalyzes the NADPH-dependent reduction of glutamyl-tRNA(Glu) to glutamate 1-semialdehyde (GSA). This chain is Glutamyl-tRNA reductase, found in Pseudomonas aeruginosa (strain ATCC 15692 / DSM 22644 / CIP 104116 / JCM 14847 / LMG 12228 / 1C / PRS 101 / PAO1).